A 386-amino-acid polypeptide reads, in one-letter code: MNMPLLDIQPRTLQFAVDLKKQTSCVVQLTNTTHHYVAFKVKTTSPKKYCVRPNVGVVAPKSTCEFTVIMQAFKEPPPDMVCKDKFLIQSTAVSAETTDEDITASMFSKAEGKHIEENKLRVTLVPPSDSPELSPINTPKQGAVFEDSILKDRLYSQSETLAPPQYEGEIVKEPRMVGHDELKAADNAKELKTPKMATVDFVEDRYTANDLKATKDSYDSSRMAKETGFDPIRSHKDADDGRAIKATTNLDAPMKKAMDLPRDQGFTNGIAVDSEPKISKERDVVQLQKTDGQNVRGLDELKLVKDIEEMKLKVDALESKLKQADSTISKLMEERSISSQHRQSLQHELAELRTKKIVKEVHNGFPLLYVCVVAFIAYVIGHFLRT.

Residue methionine 1 is modified to N-acetylmethionine. Over 1 to 363 (MNMPLLDIQP…TKKIVKEVHN (363 aa)) the chain is Cytoplasmic. The MSP domain occupies 5 to 125 (LLDIQPRTLQ…EENKLRVTLV (121 aa)). The residue at position 279 (serine 279) is a Phosphoserine. A coiled-coil region spans residues 300–353 (ELKLVKDIEEMKLKVDALESKLKQADSTISKLMEERSISSQHRQSLQHELAELR). A helical; Anchor for type IV membrane protein membrane pass occupies residues 364-384 (GFPLLYVCVVAFIAYVIGHFL).

This sequence belongs to the VAMP-associated protein (VAP) (TC 9.B.17) family. In terms of assembly, interacts with cowpea mosaic virus (CPMV) NTP-binding protein (NTB).

The protein localises to the endoplasmic reticulum membrane. Functionally, may play a role in vesicle trafficking. The protein is Vesicle-associated protein 2-2 (PVA22) of Arabidopsis thaliana (Mouse-ear cress).